The sequence spans 361 residues: Peptide chain release factor 1 (361 aa).

Gln237 is subject to N5-methylglutamine. The segment at 285-306 (QAEQSAQQTEQRRQLVGSGDRS) is disordered.

This sequence belongs to the prokaryotic/mitochondrial release factor family. Post-translationally, methylated by PrmC. Methylation increases the termination efficiency of RF1.

The protein localises to the cytoplasm. Its function is as follows. Peptide chain release factor 1 directs the termination of translation in response to the peptide chain termination codons UAG and UAA. The protein is Peptide chain release factor 1 of Alkalilimnicola ehrlichii (strain ATCC BAA-1101 / DSM 17681 / MLHE-1).